A 613-amino-acid chain; its full sequence is Na(+)/H(+) antiporter NhaA 1 (613 aa).

The tract at residues methionine 1 to proline 23 is disordered. Residues methionine 1 to valine 408 are na(+)/H(+) antiporter NhaA. The next 11 membrane-spanning stretches (helical) occupy residues alanine 29–tryptophan 49, glycine 81–glycine 101, alanine 110–phenylalanine 130, glutamine 138–isoleucine 158, isoleucine 168–phenylalanine 188, aspartate 191–valine 211, isoleucine 231–isoleucine 251, alanine 300–valine 320, tryptophan 337–leucine 357, glycine 377–isoleucine 397, and valine 408–threonine 428. The region spanning glycine 409–arginine 613 is the Thioredoxin domain.

In the N-terminal section; belongs to the NhaA Na(+)/H(+) (TC 2.A.33) antiporter family.

It localises to the cell membrane. It carries out the reaction Na(+)(in) + 2 H(+)(out) = Na(+)(out) + 2 H(+)(in). Functionally, na(+)/H(+) antiporter that extrudes sodium in exchange for external protons. This is Na(+)/H(+) antiporter NhaA 1 from Mycobacterium sp. (strain KMS).